Reading from the N-terminus, the 228-residue chain is ATP-dependent dethiobiotin synthetase BioD (228 aa).

13–18 (DIGKTF) is an ATP binding site. Residue Thr17 participates in Mg(2+) binding. Lys38 is an active-site residue. Residue Ser42 coordinates substrate. ATP is bound by residues Asp55, 116 to 119 (EGSG), 179 to 180 (NK), and 208 to 210 (PKI). Residues Asp55 and Glu116 each contribute to the Mg(2+) site.

The protein belongs to the dethiobiotin synthetase family. As to quaternary structure, homodimer. The cofactor is Mg(2+).

The protein localises to the cytoplasm. The enzyme catalyses (7R,8S)-7,8-diammoniononanoate + CO2 + ATP = (4R,5S)-dethiobiotin + ADP + phosphate + 3 H(+). The protein operates within cofactor biosynthesis; biotin biosynthesis; biotin from 7,8-diaminononanoate: step 1/2. Its function is as follows. Catalyzes a mechanistically unusual reaction, the ATP-dependent insertion of CO2 between the N7 and N8 nitrogen atoms of 7,8-diaminopelargonic acid (DAPA, also called 7,8-diammoniononanoate) to form a ureido ring. This chain is ATP-dependent dethiobiotin synthetase BioD, found in Clostridium perfringens (strain ATCC 13124 / DSM 756 / JCM 1290 / NCIMB 6125 / NCTC 8237 / Type A).